A 209-amino-acid chain; its full sequence is dITP/XTP pyrophosphatase (209 aa).

7–12 provides a ligand contact to substrate; that stretch reads TGNKGK. The active-site Proton acceptor is Asp73. Asp73 contacts Mg(2+). Substrate-binding positions include Ser74, 155 to 158, Lys178, and 183 to 184; these read FGYD and HR.

This sequence belongs to the HAM1 NTPase family. Homodimer. The cofactor is Mg(2+).

It carries out the reaction XTP + H2O = XMP + diphosphate + H(+). The catalysed reaction is dITP + H2O = dIMP + diphosphate + H(+). The enzyme catalyses ITP + H2O = IMP + diphosphate + H(+). Functionally, pyrophosphatase that catalyzes the hydrolysis of nucleoside triphosphates to their monophosphate derivatives, with a high preference for the non-canonical purine nucleotides XTP (xanthosine triphosphate), dITP (deoxyinosine triphosphate) and ITP. Seems to function as a house-cleaning enzyme that removes non-canonical purine nucleotides from the nucleotide pool, thus preventing their incorporation into DNA/RNA and avoiding chromosomal lesions. The protein is dITP/XTP pyrophosphatase of Sulfurovum sp. (strain NBC37-1).